Here is a 1072-residue protein sequence, read N- to C-terminus: DNA-directed RNA polymerase subunit beta (1072 aa).

It belongs to the RNA polymerase beta chain family. In terms of assembly, in plastids the minimal PEP RNA polymerase catalytic core is composed of four subunits: alpha, beta, beta', and beta''. When a (nuclear-encoded) sigma factor is associated with the core the holoenzyme is formed, which can initiate transcription.

It is found in the plastid. The protein resides in the chloroplast. It carries out the reaction RNA(n) + a ribonucleoside 5'-triphosphate = RNA(n+1) + diphosphate. DNA-dependent RNA polymerase catalyzes the transcription of DNA into RNA using the four ribonucleoside triphosphates as substrates. The sequence is that of DNA-directed RNA polymerase subunit beta from Capsella bursa-pastoris (Shepherd's purse).